Consider the following 488-residue polypeptide: Tocopherol cyclase, chloroplastic (488 aa).

The N-terminal 76 residues, 1-76 (MEIRSLIVSM…VPTSPNRELR (76 aa)), are a transit peptide targeting the chloroplast.

The protein resides in the plastid. It is found in the chloroplast. Its subcellular location is the plastoglobule. The enzyme catalyses delta-tocopherol = 2-methyl-6-phytyl-1,4-benzene-1,4-diol. The catalysed reaction is gamma-tocopherol = 2,3-dimethyl-6-phytylbenzene-1,4-diol. It carries out the reaction delta-tocotrienol = 6-geranylgeranyl-2-methylbenzene-1,4-diol. It catalyses the reaction gamma-tocotrienol = 6-geranylgeranyl-2,3-dimethylbenzene-1,4-diol. It participates in cofactor biosynthesis; tocopherol biosynthesis. In terms of biological role, involved in the synthesis of both tocopherols and tocotrienols (vitamin E), which presumably protect photosynthetic complexes from oxidative stress. Catalyzes the conversion of 2-methyl-6-phytyl-1,4-hydroquinone and 2,3-dimethyl-5-phytyl-1,4-hydroquinone (DMPQ) to delta- and gamma-tocopherol respectively. Also converts 2,3-dimethyl-5-geranylgeranyl-1,4-hydroquinone (DMGQ) to gamma-tocotrienol. This Arabidopsis thaliana (Mouse-ear cress) protein is Tocopherol cyclase, chloroplastic (VTE1).